Consider the following 596-residue polypeptide: Probable ABC transporter ECU01_0200/ECU01_1410 (596 aa).

3 helical membrane-spanning segments follow: residues A26–I46, L173–I193, and L289–I309. The 280-residue stretch at K39–T318 folds into the ABC transmembrane type-1 domain. The ABC transporter domain maps to V361–A593. ATP is bound by residues Y370 and G400–R411.

This sequence belongs to the ABC transporter superfamily. ABCB family. Heavy Metal importer (TC 3.A.1.210) subfamily.

The protein localises to the membrane. The chain is Probable ABC transporter ECU01_0200/ECU01_1410 from Encephalitozoon cuniculi (strain GB-M1) (Microsporidian parasite).